The following is a 253-amino-acid chain: Transcription factor bHLH106 (253 aa).

Residues 66 to 115 enclose the bHLH domain; the sequence is AALRNHKEAERRRRERINSHLNKLRNVLSCNSKTDKATLLAKVVQRVREL.

In terms of assembly, homodimer.

It localises to the nucleus. The sequence is that of Transcription factor bHLH106 (BHLH106) from Arabidopsis thaliana (Mouse-ear cress).